The following is a 443-amino-acid chain: MFIFVVGLNHKSAPVEVREKLSFTEAQLSEALHKLQGMAGIEGCCILSTCNRTEIYGASTDMEKGMTAVKRFVLEWGQLQPQDFSKYFYVHTLYDAIRHLFRVASGLDSMVLGETQILGQVRTAYQRSCNEDCSNGIVNTWFQQAITVGKRVRTETGIDQHPVSISYTAVELAEQVLGGLKGRTAMVLGAGKMSVLTLKHLVAEGVDKIIIANRSVEKAEELAKSCGGEAISFADVNHRLEEADILISCTAATHYVIRKSMVEQVMDRRGGKPVFFFDIAVPRDIDPEVAQVPGTHLYDIDAMQHVIDRNLAERRKCAAEAEIIIEHEINQFMRWLNSLFVIPTIVGLKNKGNQIKEKELDRALCKLKHLSEKEKKLVGSLASSIVNQLLHDPITQLRHYAASPEGHLYSEILQNLFCLDVPGQRQKHVVVHYPAVEQRQNRA.

Residues 49–52 (TCNR), Ser-109, 114–116 (ETQ), and Gln-120 each bind substrate. The Nucleophile role is filled by Cys-50. 189–194 (GAGKMS) is an NADP(+) binding site.

Belongs to the glutamyl-tRNA reductase family. In terms of assembly, homodimer.

It carries out the reaction (S)-4-amino-5-oxopentanoate + tRNA(Glu) + NADP(+) = L-glutamyl-tRNA(Glu) + NADPH + H(+). The protein operates within porphyrin-containing compound metabolism; protoporphyrin-IX biosynthesis; 5-aminolevulinate from L-glutamyl-tRNA(Glu): step 1/2. Functionally, catalyzes the NADPH-dependent reduction of glutamyl-tRNA(Glu) to glutamate 1-semialdehyde (GSA). This is Glutamyl-tRNA reductase from Heliobacterium mobile (Heliobacillus mobilis).